Reading from the N-terminus, the 223-residue chain is MLPKRASFLVSVATIPLLFGYHAIGILMFTVIAFMMQFFRDPDRIPPSDEDLIIAPADGRRLSGKIDRIERVGSDYPLIDRIFPDGSGGILISTFMSPFDVHVNRAPVSGKVIYTEHVDGRFQVARSRVLTENEKNLIVIKTDYGNVGVIQIAGFVARRIVQYVKEGEYVERGDRIGMIRFGSRVDLVLPENCEVLVKTGSRPMAGETVVARFNPGKKRVNVQ.

Ser183 serves as the catalytic Schiff-base intermediate with substrate; via pyruvic acid. The residue at position 183 (Ser183) is a Pyruvic acid (Ser); by autocatalysis.

Belongs to the phosphatidylserine decarboxylase family. PSD-A subfamily. Heterodimer of a large membrane-associated beta subunit and a small pyruvoyl-containing alpha subunit. It depends on pyruvate as a cofactor. Is synthesized initially as an inactive proenzyme. Formation of the active enzyme involves a self-maturation process in which the active site pyruvoyl group is generated from an internal serine residue via an autocatalytic post-translational modification. Two non-identical subunits are generated from the proenzyme in this reaction, and the pyruvate is formed at the N-terminus of the alpha chain, which is derived from the carboxyl end of the proenzyme. The post-translation cleavage follows an unusual pathway, termed non-hydrolytic serinolysis, in which the side chain hydroxyl group of the serine supplies its oxygen atom to form the C-terminus of the beta chain, while the remainder of the serine residue undergoes an oxidative deamination to produce ammonia and the pyruvoyl prosthetic group on the alpha chain.

It localises to the cell membrane. It catalyses the reaction archaetidylserine + H(+) = archaetidylethanolamine + CO2. In terms of biological role, catalyzes the formation of archaetidylethanolamine (PtdEtn) from archaetidylserine (PtdSer). This Methanothermobacter thermautotrophicus (strain ATCC 29096 / DSM 1053 / JCM 10044 / NBRC 100330 / Delta H) (Methanobacterium thermoautotrophicum) protein is Putative archaetidylserine decarboxylase proenzyme.